A 710-amino-acid polypeptide reads, in one-letter code: Dihydroxyacetone synthase (710 aa).

Thiamine diphosphate-binding positions include histidine 78 and 128–130 (GPL). Residues aspartate 169, asparagine 199, and valine 201 each coordinate Mg(2+). Asparagine 199 contributes to the thiamine diphosphate binding site. Thiamine diphosphate-binding residues include histidine 275, glutamate 433, and phenylalanine 461. The active-site Proton donor is the glutamate 433. Positions 708-710 (NKL) match the Microbody targeting signal motif.

This sequence belongs to the transketolase family. It depends on Mg(2+) as a cofactor. Ca(2+) is required as a cofactor. Requires Mn(2+) as cofactor. The cofactor is Co(2+). Thiamine diphosphate serves as cofactor.

It is found in the peroxisome. It catalyses the reaction D-xylulose 5-phosphate + formaldehyde = dihydroxyacetone + D-glyceraldehyde 3-phosphate. This is the major methanol assimilatory enzyme from the methylotrophic Hansenula polymorpha. The polypeptide is Dihydroxyacetone synthase (DAS) (Pichia angusta (Yeast)).